The sequence spans 1437 residues: DNA polymerase III PolC-type (1437 aa).

The Exonuclease domain maps to 420-576 (YVIFDVETTG…YDSETTGHLC (157 aa)).

Belongs to the DNA polymerase type-C family. PolC subfamily.

It localises to the cytoplasm. It carries out the reaction DNA(n) + a 2'-deoxyribonucleoside 5'-triphosphate = DNA(n+1) + diphosphate. Required for replicative DNA synthesis. This DNA polymerase also exhibits 3' to 5' exonuclease activity. The chain is DNA polymerase III PolC-type from Pediococcus pentosaceus (strain ATCC 25745 / CCUG 21536 / LMG 10740 / 183-1w).